The following is a 211-amino-acid chain: Protein-L-isoaspartate O-methyltransferase (211 aa).

Residue S60 is part of the active site.

Belongs to the methyltransferase superfamily. L-isoaspartyl/D-aspartyl protein methyltransferase family.

The protein localises to the cytoplasm. The enzyme catalyses [protein]-L-isoaspartate + S-adenosyl-L-methionine = [protein]-L-isoaspartate alpha-methyl ester + S-adenosyl-L-homocysteine. Its function is as follows. Catalyzes the methyl esterification of L-isoaspartyl residues in peptides and proteins that result from spontaneous decomposition of normal L-aspartyl and L-asparaginyl residues. It plays a role in the repair and/or degradation of damaged proteins. This chain is Protein-L-isoaspartate O-methyltransferase, found in Alteromonas mediterranea (strain DSM 17117 / CIP 110805 / LMG 28347 / Deep ecotype).